Here is a 269-residue protein sequence, read N- to C-terminus: Putative pyruvate, phosphate dikinase regulatory protein (269 aa).

147-154 contacts ADP; the sequence is GVSRTSKT.

This sequence belongs to the pyruvate, phosphate/water dikinase regulatory protein family. PDRP subfamily.

The catalysed reaction is N(tele)-phospho-L-histidyl/L-threonyl-[pyruvate, phosphate dikinase] + ADP = N(tele)-phospho-L-histidyl/O-phospho-L-threonyl-[pyruvate, phosphate dikinase] + AMP + H(+). The enzyme catalyses N(tele)-phospho-L-histidyl/O-phospho-L-threonyl-[pyruvate, phosphate dikinase] + phosphate + H(+) = N(tele)-phospho-L-histidyl/L-threonyl-[pyruvate, phosphate dikinase] + diphosphate. Its function is as follows. Bifunctional serine/threonine kinase and phosphorylase involved in the regulation of the pyruvate, phosphate dikinase (PPDK) by catalyzing its phosphorylation/dephosphorylation. This chain is Putative pyruvate, phosphate dikinase regulatory protein, found in Geotalea uraniireducens (strain Rf4) (Geobacter uraniireducens).